The primary structure comprises 408 residues: Serine/threonine transporter SstT (408 aa).

9 helical membrane passes run 11–31 (LANG…VSLA), 43–63 (FLGS…VFIL), 82–102 (IVVL…LLSM), 141–161 (ALMT…GLAL), 192–212 (IGIF…AIAG), 216–236 (LLAV…PLIV), 298–318 (MGGA…TLGI), 339–359 (ASGV…LFGI), and 363–383 (VAMQ…AAET).

It belongs to the dicarboxylate/amino acid:cation symporter (DAACS) (TC 2.A.23) family.

The protein resides in the cell inner membrane. It carries out the reaction L-serine(in) + Na(+)(in) = L-serine(out) + Na(+)(out). It catalyses the reaction L-threonine(in) + Na(+)(in) = L-threonine(out) + Na(+)(out). In terms of biological role, involved in the import of serine and threonine into the cell, with the concomitant import of sodium (symport system). This chain is Serine/threonine transporter SstT, found in Shewanella sp. (strain MR-7).